The chain runs to 526 residues: Probable feruloyl esterase B-1 (526 aa).

The N-terminal stretch at 1–19 is a signal peptide; the sequence is MPSLRRLLPFLAAGSAALA. Disulfide bonds link C28/C75 and C63/C114. Residues N53, N85, N98, and N138 are each glycosylated (N-linked (GlcNAc...) asparagine). 3 disulfide bridges follow: C187-C441, C256-C273, and C282-C291. The Acyl-ester intermediate role is filled by S188. A glycan (N-linked (GlcNAc...) asparagine) is linked at N246. Positions 257, 260, 262, 264, and 266 each coordinate Ca(2+). N287 and N311 each carry an N-linked (GlcNAc...) asparagine glycan. Residues D400 and H440 each act as charge relay system in the active site. 2 N-linked (GlcNAc...) asparagine glycosylation sites follow: N490 and N516. A disulfide bridge links C503 with C525.

It belongs to the tannase family.

It localises to the secreted. The enzyme catalyses feruloyl-polysaccharide + H2O = ferulate + polysaccharide.. Its function is as follows. Involved in degradation of plant cell walls. Hydrolyzes the feruloyl-arabinose ester bond in arabinoxylans as well as the feruloyl-galactose and feruloyl-arabinose ester bonds in pectin. The sequence is that of Probable feruloyl esterase B-1 (faeB-1) from Aspergillus flavus (strain ATCC 200026 / FGSC A1120 / IAM 13836 / NRRL 3357 / JCM 12722 / SRRC 167).